Here is a 491-residue protein sequence, read N- to C-terminus: Serine/threonine-protein phosphatase 2A regulatory subunit B'' subunit delta (491 aa).

The region spanning 331–366 (TTPTSTEYWFRCMDLDGDGALSMFELEFFYEEQAQR) is the EF-hand domain. 4 residues coordinate Ca(2+): D344, D346, D348, and E355. Acidic residues-rich tracts occupy residues 460–473 (AMAE…EGSD) and 481–491 (ADEDCDDLEPL). Residues 460–491 (AMAEDDDDHDEGSDPIDLYGLADEDCDDLEPL) form a disordered region.

In terms of assembly, PP2A consists of a common heterodimeric core enzyme, composed of a 36 kDa catalytic subunit (subunit C) and a 65 kDa constant regulatory subunit (PR65 or subunit A), that associates with a variety of regulatory subunits. Proteins that associate with the core dimer include three families of regulatory subunits B (the R2/B/PR55/B55, R3/B''/PR72/PR130/PR59 and R5/B'/B56 families), the 48 kDa variable regulatory subunit, viral proteins, and cell signaling molecules. As to expression, expressed in testis, kidney, liver, lung, spleen, brain and heart.

Its function is as follows. The B regulatory subunit might modulate substrate selectivity and catalytic activity, and might also direct the localization of the catalytic enzyme to a particular subcellular compartment. Interacts with retinoblastoma-related protein p107 (in vivo). May target PP2A core dimer to p107 resulting in dephosphorylation of p107. In Mus musculus (Mouse), this protein is Serine/threonine-protein phosphatase 2A regulatory subunit B'' subunit delta (Ppp2r3d).